A 74-amino-acid chain; its full sequence is Translational regulator CsrA (74 aa).

This sequence belongs to the CsrA/RsmA family. In terms of assembly, homodimer; the beta-strands of each monomer intercalate to form a hydrophobic core, while the alpha-helices form wings that extend away from the core.

It localises to the cytoplasm. A translational regulator that binds mRNA to regulate translation initiation and/or mRNA stability. Usually binds in the 5'-UTR at or near the Shine-Dalgarno sequence preventing ribosome-binding, thus repressing translation. Its main target seems to be the major flagellin gene, while its function is anatagonized by FliW. This chain is Translational regulator CsrA, found in Oceanobacillus iheyensis (strain DSM 14371 / CIP 107618 / JCM 11309 / KCTC 3954 / HTE831).